A 171-amino-acid polypeptide reads, in one-letter code: Co-chaperone protein HscB homolog (171 aa).

Residues 2 to 74 (NYFELFGLPI…LRRAEYLLSL (73 aa)) form the J domain.

This sequence belongs to the HscB family. As to quaternary structure, interacts with HscA and stimulates its ATPase activity.

Functionally, co-chaperone involved in the maturation of iron-sulfur cluster-containing proteins. Seems to help targeting proteins to be folded toward HscA. The protein is Co-chaperone protein HscB homolog of Vibrio cholerae serotype O1 (strain ATCC 39541 / Classical Ogawa 395 / O395).